The following is a 270-amino-acid chain: Acetylglutamate kinase (270 aa).

Substrate contacts are provided by residues 53 to 54 (GG), arginine 75, and asparagine 167.

This sequence belongs to the acetylglutamate kinase family. ArgB subfamily.

Its subcellular location is the cytoplasm. The enzyme catalyses N-acetyl-L-glutamate + ATP = N-acetyl-L-glutamyl 5-phosphate + ADP. It participates in amino-acid biosynthesis; L-arginine biosynthesis; N(2)-acetyl-L-ornithine from L-glutamate: step 2/4. Functionally, catalyzes the ATP-dependent phosphorylation of N-acetyl-L-glutamate. In Shewanella halifaxensis (strain HAW-EB4), this protein is Acetylglutamate kinase.